A 150-amino-acid chain; its full sequence is Small ribosomal subunit protein uS11 (150 aa).

A disordered region spans residues 130–150; that stretch reads DVTPIPSDSTRRKSGRRGRRL. The segment covering 141–150 has biased composition (basic residues); sequence RKSGRRGRRL.

Belongs to the universal ribosomal protein uS11 family.

This Lupinus luteus (European yellow lupine) protein is Small ribosomal subunit protein uS11 (RPS14).